The sequence spans 338 residues: Nicotinate-nucleotide--dimethylbenzimidazole phosphoribosyltransferase (338 aa).

Catalysis depends on Glu305, which acts as the Proton acceptor.

It belongs to the CobT family.

It carries out the reaction 5,6-dimethylbenzimidazole + nicotinate beta-D-ribonucleotide = alpha-ribazole 5'-phosphate + nicotinate + H(+). The protein operates within nucleoside biosynthesis; alpha-ribazole biosynthesis; alpha-ribazole from 5,6-dimethylbenzimidazole: step 1/2. Catalyzes the synthesis of alpha-ribazole-5'-phosphate from nicotinate mononucleotide (NAMN) and 5,6-dimethylbenzimidazole (DMB). This chain is Nicotinate-nucleotide--dimethylbenzimidazole phosphoribosyltransferase, found in Rhizobium meliloti (strain 1021) (Ensifer meliloti).